Consider the following 742-residue polypeptide: Synaptic vesicle glycoprotein 2A (742 aa).

Positions 1–57 are interaction with SYT1; that stretch reads MEEGFRDRAAFIRGAKDIAKEVKKHAAKKVVKGLDRVQDEYSRRSYSRFEEEDDDDD. The Cytoplasmic portion of the chain corresponds to 1–169; it reads MEEGFRDRAA…GHGRFQWTLY (169 aa). Over residues 33–49 the composition is skewed to basic and acidic residues; sequence GLDRVQDEYSRRSYSRF. Residues 33–144 form a disordered region; the sequence is GLDRVQDEYS…GRGEAQRRKE (112 aa). A phosphoserine mark is found at Ser-80 and Ser-81. Thr-84 is subject to Phosphothreonine. The span at 122–137 shows a compositional bias: gly residues; sequence VRGGLSDGEGPPGGRG. At Ser-127 the chain carries Phosphoserine. The chain crosses the membrane as a helical span at residues 170 to 190; it reads FVLGLALMADGVEVFVVGFVL. Residues 191–205 lie on the Extracellular side of the membrane; that stretch reads PSAEKDMCLSDSNKG. The chain crosses the membrane as a helical span at residues 206–226; that stretch reads MLGLIVYLGMMVGAFLWGGLA. Over 227–233 the chain is Cytoplasmic; that stretch reads DRLGRRQ. A helical transmembrane segment spans residues 234 to 254; it reads CLLISLSVNSVFAFFSSFVQG. The Extracellular segment spans residues 255–262; that stretch reads YGTFLFCR. The chain crosses the membrane as a helical span at residues 263–283; that stretch reads LLSGVGIGGSIPIVFSYFSEF. Topologically, residues 284-294 are cytoplasmic; sequence LAQEKRGEHLS. Residues 295–315 traverse the membrane as a helical segment; sequence WLCMFWMIGGVYAAAMAWAII. Residues 316–334 lie on the Extracellular side of the membrane; the sequence is PHYGWSFQMGSAYQFHSWR. The chain crosses the membrane as a helical span at residues 335 to 355; sequence VFVLVCAFPSVFAIGALTTQP. Residues 356-447 lie on the Cytoplasmic side of the membrane; it reads ESPRFFLENG…CFGPEYRRIT (92 aa). Ser-393 carries the post-translational modification Phosphoserine. Residues 448–468 form a helical membrane-spanning segment; the sequence is LMMMGVWFTMSFSYYGLTVWF. Over 469–598 the chain is Extracellular; the sequence is PDMIRHLQAV…GTGEGAYMVY (130 aa). Tyr-480 bears the Phosphotyrosine mark. 3 N-linked (GlcNAc...) asparagine glycosylation sites follow: Asn-498, Asn-548, and Asn-573. The chain crosses the membrane as a helical span at residues 599-619; that stretch reads FVSFLGTLAVLPGNIVSALLM. Over 620 to 626 the chain is Cytoplasmic; that stretch reads DKIGRLR. The chain crosses the membrane as a helical span at residues 627 to 647; sequence MLAGSSVMSCVSCFFLSFGNS. Residues 648–651 are Extracellular-facing; the sequence is ESAM. The helical transmembrane segment at 652 to 672 threads the bilayer; that stretch reads IALLCLFGGVSIASWNALDVL. The Cytoplasmic portion of the chain corresponds to 673-685; sequence TVELYPSDKRTTA. Residues 686–708 traverse the membrane as a helical segment; sequence FGFLNALCKLAAVLGISIFTSFV. The Extracellular portion of the chain corresponds to 709-712; that stretch reads GITK. A helical membrane pass occupies residues 713–731; the sequence is AAPILFASAALALGSSLAL. Residues 732–742 are Cytoplasmic-facing; sequence KLPETRGQVLQ.

The protein belongs to the major facilitator superfamily. Interacts with SYT1/synaptotagmin-1 in a calcium-dependent manner. Binds the adapter protein complex AP-2. As to quaternary structure, (Microbial infection) Interacts with C.botulinum neurotoxin type A2 (BoNT/A, botA). Interaction is improved by glycosylation of SV2. Post-translationally, phosphorylation by CK1 of the N-terminal cytoplasmic domain regulates interaction with SYT1. In terms of processing, N-glycosylated.

It is found in the presynapse. Its subcellular location is the cytoplasmic vesicle. The protein resides in the secretory vesicle. It localises to the synaptic vesicle membrane. Its function is as follows. Plays a role in the control of regulated secretion in neural and endocrine cells, enhancing selectively low-frequency neurotransmission. Positively regulates vesicle fusion by maintaining the readily releasable pool of secretory vesicles. (Microbial infection) Receptor for the C.botulinum neurotoxin type A2 (BoNT/A, botA); glycosylation is not essential but enhances the interaction. Probably also serves as a receptor for the closely related C.botulinum neurotoxin type A1. The chain is Synaptic vesicle glycoprotein 2A (SV2A) from Homo sapiens (Human).